We begin with the raw amino-acid sequence, 112 residues long: Large ribosomal subunit protein P2 (112 aa).

Positions 81–112 (VETAEAKKEDKKEEKKEEEEEEEDDLGFSLFG) are disordered. Positions 84–95 (AEAKKEDKKEEK) are enriched in basic and acidic residues. Over residues 96 to 106 (KEEEEEEEDDL) the composition is skewed to acidic residues.

It belongs to the eukaryotic ribosomal protein P1/P2 family. As to quaternary structure, P1 and P2 exist as dimers at the large ribosomal subunit. Phosphorylated.

Functionally, plays an important role in the elongation step of protein synthesis. The sequence is that of Large ribosomal subunit protein P2 (MAL3P3.19) from Plasmodium falciparum (isolate 3D7).